The primary structure comprises 155 residues: 6,7-dimethyl-8-ribityllumazine synthase (155 aa).

5-amino-6-(D-ribitylamino)uracil is bound by residues Phe23, 57–59 (AFE), and 81–83 (AVI). Residue 86–87 (ST) participates in (2S)-2-hydroxy-3-oxobutyl phosphate binding. Catalysis depends on His89, which acts as the Proton donor. 5-amino-6-(D-ribitylamino)uracil is bound at residue Phe114. Residue Arg128 coordinates (2S)-2-hydroxy-3-oxobutyl phosphate.

Belongs to the DMRL synthase family.

It carries out the reaction (2S)-2-hydroxy-3-oxobutyl phosphate + 5-amino-6-(D-ribitylamino)uracil = 6,7-dimethyl-8-(1-D-ribityl)lumazine + phosphate + 2 H2O + H(+). It functions in the pathway cofactor biosynthesis; riboflavin biosynthesis; riboflavin from 2-hydroxy-3-oxobutyl phosphate and 5-amino-6-(D-ribitylamino)uracil: step 1/2. In terms of biological role, catalyzes the formation of 6,7-dimethyl-8-ribityllumazine by condensation of 5-amino-6-(D-ribitylamino)uracil with 3,4-dihydroxy-2-butanone 4-phosphate. This is the penultimate step in the biosynthesis of riboflavin. This is 6,7-dimethyl-8-ribityllumazine synthase from Dehalococcoides mccartyi (strain ATCC BAA-2100 / JCM 16839 / KCTC 5957 / BAV1).